The following is a 200-amino-acid chain: Pyridoxal 5'-phosphate synthase subunit PdxT (200 aa).

52 to 54 (GES) contributes to the L-glutamine binding site. Cysteine 84 functions as the Nucleophile in the catalytic mechanism. Residues arginine 116 and 145–146 (IR) contribute to the L-glutamine site. Active-site charge relay system residues include histidine 181 and glutamate 183.

Belongs to the glutaminase PdxT/SNO family. In the presence of PdxS, forms a dodecamer of heterodimers. Only shows activity in the heterodimer.

It carries out the reaction aldehydo-D-ribose 5-phosphate + D-glyceraldehyde 3-phosphate + L-glutamine = pyridoxal 5'-phosphate + L-glutamate + phosphate + 3 H2O + H(+). It catalyses the reaction L-glutamine + H2O = L-glutamate + NH4(+). The protein operates within cofactor biosynthesis; pyridoxal 5'-phosphate biosynthesis. In terms of biological role, catalyzes the hydrolysis of glutamine to glutamate and ammonia as part of the biosynthesis of pyridoxal 5'-phosphate. The resulting ammonia molecule is channeled to the active site of PdxS. This chain is Pyridoxal 5'-phosphate synthase subunit PdxT, found in Sulfurisphaera tokodaii (strain DSM 16993 / JCM 10545 / NBRC 100140 / 7) (Sulfolobus tokodaii).